Reading from the N-terminus, the 87-residue chain is Small ribosomal subunit protein bS20 (87 aa).

Positions 1 to 10 are enriched in basic residues; the sequence is MANIKSKQKR. Positions 1–27 are disordered; it reads MANIKSKQKRILTNEKSRQRNKSVRSA.

It belongs to the bacterial ribosomal protein bS20 family.

Binds directly to 16S ribosomal RNA. This Corynebacterium aurimucosum (strain ATCC 700975 / DSM 44827 / CIP 107346 / CN-1) (Corynebacterium nigricans) protein is Small ribosomal subunit protein bS20.